The chain runs to 291 residues: ATP synthase subunit a (291 aa).

The next 6 membrane-spanning stretches (helical) occupy residues 50–70 (LDSM…FWIV), 108–128 (IAPL…MDLI), 161–181 (DPNI…FYSI), 203–223 (PVAK…TFLA), 241–261 (LIFI…SVPW), and 262–282 (AIFH…LTIV).

This sequence belongs to the ATPase A chain family. As to quaternary structure, F-type ATPases have 2 components, CF(1) - the catalytic core - and CF(0) - the membrane proton channel. CF(1) has five subunits: alpha(3), beta(3), gamma(1), delta(1), epsilon(1). CF(0) has three main subunits: a(1), b(2) and c(9-12). The alpha and beta chains form an alternating ring which encloses part of the gamma chain. CF(1) is attached to CF(0) by a central stalk formed by the gamma and epsilon chains, while a peripheral stalk is formed by the delta and b chains.

The protein resides in the cell inner membrane. Its function is as follows. Key component of the proton channel; it plays a direct role in the translocation of protons across the membrane. The sequence is that of ATP synthase subunit a from Acinetobacter baumannii (strain SDF).